Here is a 103-residue protein sequence, read N- to C-terminus: Putative inactive recombination-promoting nuclease-like protein YjiP (103 aa).

Belongs to the Rpn/YhgA-like nuclease family.

Its function is as follows. This pseudogene is the N-terminal fragment of low activity DNA endonuclease RpnD which probably yields 3'-hydroxyl ends. The intact protein can be seen in this entry (AC B7NGZ6). Expression of the repaired protein increases the frequency of recA-independent recombination, but also decreases viability probably via DNA damage; in a RecA strain expression has no effect on viability but does induce the SOS repair response. May play a role in horizontal gene transfer. This Escherichia coli (strain K12) protein is Putative inactive recombination-promoting nuclease-like protein YjiP (yjiP).